We begin with the raw amino-acid sequence, 398 residues long: Polyferredoxin protein VhuB (398 aa).

4Fe-4S ferredoxin-type domains follow at residues 2-31, 25-53, 54-83, 82-111, 123-152, 152-181, 191-219, 220-249, 259-291, 300-331, and 339-368; these read AGIK…IAPF, AIEI…VENN, GKLI…VDDR, DRFP…IPGK, QEPI…IEDE, ELAV…VAGK, KSFT…YNRE, DLIV…LEVE, EGLV…MINQ, TKTD…MGKI, and NRIE…LTGD. Positions 11, 14, 17, 21, 34, 37, 40, 44, 63, 66, 69, 73, 91, 94, 97, 101, 132, 135, 138, 142, 161, 164, 167, 171, 199, 202, 205, 209, 229, 232, 235, 239, 268, 271, 274, 278, 311, 314, 317, 321, 348, 351, 354, 358, 377, 380, 383, and 387 each coordinate [4Fe-4S] cluster.

[4Fe-4S] cluster serves as cofactor.

In Methanococcus voltae, this protein is Polyferredoxin protein VhuB (vhuB).